The chain runs to 293 residues: Phosphatidylserine decarboxylase proenzyme (293 aa).

Residues Asp88, His144, and Ser247 each act as charge relay system; for autoendoproteolytic cleavage activity in the active site. The active-site Schiff-base intermediate with substrate; via pyruvic acid; for decarboxylase activity is the Ser247. Ser247 bears the Pyruvic acid (Ser); by autocatalysis mark.

It belongs to the phosphatidylserine decarboxylase family. PSD-B subfamily. Prokaryotic type I sub-subfamily. In terms of assembly, heterodimer of a large membrane-associated beta subunit and a small pyruvoyl-containing alpha subunit. Requires pyruvate as cofactor. Is synthesized initially as an inactive proenzyme. Formation of the active enzyme involves a self-maturation process in which the active site pyruvoyl group is generated from an internal serine residue via an autocatalytic post-translational modification. Two non-identical subunits are generated from the proenzyme in this reaction, and the pyruvate is formed at the N-terminus of the alpha chain, which is derived from the carboxyl end of the proenzyme. The autoendoproteolytic cleavage occurs by a canonical serine protease mechanism, in which the side chain hydroxyl group of the serine supplies its oxygen atom to form the C-terminus of the beta chain, while the remainder of the serine residue undergoes an oxidative deamination to produce ammonia and the pyruvoyl prosthetic group on the alpha chain. During this reaction, the Ser that is part of the protease active site of the proenzyme becomes the pyruvoyl prosthetic group, which constitutes an essential element of the active site of the mature decarboxylase.

It localises to the cell membrane. It carries out the reaction a 1,2-diacyl-sn-glycero-3-phospho-L-serine + H(+) = a 1,2-diacyl-sn-glycero-3-phosphoethanolamine + CO2. It functions in the pathway phospholipid metabolism; phosphatidylethanolamine biosynthesis; phosphatidylethanolamine from CDP-diacylglycerol: step 2/2. Functionally, catalyzes the formation of phosphatidylethanolamine (PtdEtn) from phosphatidylserine (PtdSer). This Xylella fastidiosa (strain M23) protein is Phosphatidylserine decarboxylase proenzyme.